Consider the following 532-residue polypeptide: Eukaryotic translation initiation factor 4B1 (532 aa).

3 disordered regions span residues 16-365 (EAER…LEEQ), 401-434 (KKLE…IIRG), and 451-532 (RFRQ…REGW). The span at 26-35 (AEATAATADT) shows a compositional bias: low complexity. Gly residues-rich tracts occupy residues 105-120 (RLGG…SGGR) and 132-147 (WSGG…YGGG). Residues 167–180 (RADEVDDWGKEKKP) are compositionally biased toward basic and acidic residues. The Nuclear localization signal 1 signature appears at 177–184 (EKKPLPSF). A compositionally biased stretch (gly residues) spans 193 to 217 (SGDGGGFGGGGSGFGGGGGGGGGGL). The Nuclear localization signal 2 motif lies at 237–244 (SSTFGSSF). Positions 237–247 (SSTFGSSFGDS) are enriched in low complexity. 2 stretches are compositionally biased toward basic and acidic residues: residues 249–263 (QEER…RKVE) and 286–310 (RPRE…EAKK). Positions 315–337 (TSRPTSAHSSRPSSAQSNRSESS) are enriched in low complexity. Basic and acidic residues-rich tracts occupy residues 355–365 (AKPREVLLEEQ), 401–416 (KKLE…KESD), 472–494 (ERTH…ERPR), and 507–520 (NEQR…KERG).

This sequence belongs to the eIF-4 subunit B family. As to quaternary structure, homodimer. Nonspherical monomer. mRNA-discriminating component of initiation complexes. Post-translationally, phosphorylated.

The protein resides in the nucleus. In terms of biological role, promotes the eIF4F and eIF4A RNA-dependent ATP-hydrolysis activity with different efficiency depending on mRNAs, thus providing mRNA discrimination during initiation of translation. The chain is Eukaryotic translation initiation factor 4B1 from Arabidopsis thaliana (Mouse-ear cress).